Consider the following 300-residue polypeptide: Pantothenate synthetase (300 aa).

Position 30–37 (30–37 (MGYLHEGH)) interacts with ATP. Residue His-37 is the Proton donor of the active site. Residue Gln-61 participates in (R)-pantoate binding. Gln-61 contributes to the beta-alanine binding site. Position 147-150 (147-150 (GMKD)) interacts with ATP. Gln-153 is a binding site for (R)-pantoate. ATP is bound by residues Val-176 and 184-187 (KSSR).

Belongs to the pantothenate synthetase family. Homodimer.

The protein resides in the cytoplasm. It carries out the reaction (R)-pantoate + beta-alanine + ATP = (R)-pantothenate + AMP + diphosphate + H(+). Its pathway is cofactor biosynthesis; (R)-pantothenate biosynthesis; (R)-pantothenate from (R)-pantoate and beta-alanine: step 1/1. In terms of biological role, catalyzes the condensation of pantoate with beta-alanine in an ATP-dependent reaction via a pantoyl-adenylate intermediate. The chain is Pantothenate synthetase from Geobacillus kaustophilus (strain HTA426).